Reading from the N-terminus, the 237-residue chain is Thiamine-phosphate synthase (237 aa).

Residues 41–45 (QLRDK) and N73 contribute to the 4-amino-2-methyl-5-(diphosphooxymethyl)pyrimidine site. Mg(2+) contacts are provided by D74 and D93. S112 provides a ligand contact to 4-amino-2-methyl-5-(diphosphooxymethyl)pyrimidine. Residue 143-145 (TPT) coordinates 2-[(2R,5Z)-2-carboxy-4-methylthiazol-5(2H)-ylidene]ethyl phosphate. Residue K146 coordinates 4-amino-2-methyl-5-(diphosphooxymethyl)pyrimidine. Residue G192 participates in 2-[(2R,5Z)-2-carboxy-4-methylthiazol-5(2H)-ylidene]ethyl phosphate binding.

It belongs to the thiamine-phosphate synthase family. Mg(2+) is required as a cofactor.

The catalysed reaction is 2-[(2R,5Z)-2-carboxy-4-methylthiazol-5(2H)-ylidene]ethyl phosphate + 4-amino-2-methyl-5-(diphosphooxymethyl)pyrimidine + 2 H(+) = thiamine phosphate + CO2 + diphosphate. The enzyme catalyses 2-(2-carboxy-4-methylthiazol-5-yl)ethyl phosphate + 4-amino-2-methyl-5-(diphosphooxymethyl)pyrimidine + 2 H(+) = thiamine phosphate + CO2 + diphosphate. It carries out the reaction 4-methyl-5-(2-phosphooxyethyl)-thiazole + 4-amino-2-methyl-5-(diphosphooxymethyl)pyrimidine + H(+) = thiamine phosphate + diphosphate. Its pathway is cofactor biosynthesis; thiamine diphosphate biosynthesis; thiamine phosphate from 4-amino-2-methyl-5-diphosphomethylpyrimidine and 4-methyl-5-(2-phosphoethyl)-thiazole: step 1/1. Condenses 4-methyl-5-(beta-hydroxyethyl)thiazole monophosphate (THZ-P) and 2-methyl-4-amino-5-hydroxymethyl pyrimidine pyrophosphate (HMP-PP) to form thiamine monophosphate (TMP). The chain is Thiamine-phosphate synthase from Arthrobacter sp. (strain FB24).